The primary structure comprises 176 residues: Secreted LysM effector ELP2 (176 aa).

An N-terminal signal peptide occupies residues 1-18; the sequence is MQFSIFTVLAAAASFAVA. Residues 31 to 45 are compositionally biased toward low complexity; the sequence is TSAAANPSPTTSGAA. The segment at 31 to 50 is disordered; sequence TSAAANPSPTTSGAANPSPT. Residues 58 to 102 enclose the LysM 1 domain; it reads HKTTVKAGQTLTTIAERFHSGICDIAWQNKLENPNVIFVGQVLLV. N-linked (GlcNAc...) asparagine glycosylation occurs at Asn-111. The region spanning 129-173 is the LysM 2 domain; it reads ATYTIKSGDTFFAVAQSLGITTDSLTGANPGVVPENLQIDQVINV.

This sequence belongs to the secreted LysM effector family. As to quaternary structure, forms homodimers in a chitin-independent manner through interactions at the N-termini of EPL2 monomers. Homodimers are further polymerized in a chitin-dependent manner.

It is found in the secreted. Secreted effector that enables the plant pathogenic fungus to manipulate host defenses for successful infection. Binds chitin oligomers and polymer with high affinity and plays a dual role, not only in the suppression of chitin-triggered immune responses, but also in appressorium function. Does not protect fungal hyphae against plant chitinases but suppresses chitin-triggered plant immune responses. Chitin-induced polymerization of homodimers forms a contiguous ELP2 highly oligomeric super-complexe that may precipitate at infection sites to eliminate chitin oligomers, and thus suppress the activation of chitin-induced plant immunity. This chain is Secreted LysM effector ELP2, found in Colletotrichum higginsianum (strain IMI 349063) (Crucifer anthracnose fungus).